Reading from the N-terminus, the 288-residue chain is Fibroblast growth factor 2 (288 aa).

A disordered region spans residues 1-133; sequence MVGVGGGDVE…RGSRPGPAGT (133 aa). The propeptide at 1 to 142 is or 93, or 124, or 125, or 131, or 161; sequence MVGVGGGDVE…TMAAGSITTL (142 aa). Positions 52–64 are enriched in low complexity; it reads SVNPRSRAAGSPR. The span at 68–84 shows a compositional bias: basic and acidic residues; sequence RRTEERPSGSRLGDRGR. 3 positions are modified to omega-N-methylarginine; alternate: Arg-108, Arg-110, and Arg-112. Symmetric dimethylarginine; alternate occurs at positions 108, 110, and 112. Low complexity predominate over residues 113–132; that stretch reads GTAAPRAAPAARGSRPGPAG. Asn-169 is a heparin binding site. The short motif at 179-181 is the Cell attachment site; atypical element; that stretch reads DGR. Residue Tyr-215 is modified to Phosphotyrosine; by TEC. Residues 221–223 carry the Cell attachment site; atypical motif; sequence DGR. Lys-228 is covalently cross-linked (Glycyl lysine isopeptide (Lys-Gly) (interchain with G-Cter in SUMO1)). The heparin-binding stretch occupies residues 261–277; sequence KRTGQYKLGSKTGPGQK.

Belongs to the heparin-binding growth factors family. As to quaternary structure, monomer. Homodimer. Interacts with FGFR1, FGFR2, FGFR3 and FGFR4. Affinity between fibroblast growth factors (FGFs) and their receptors is increased by heparan sulfate glycosaminoglycans that function as coreceptors. Interacts with CSPG4, FGFBP1 and TEC. Found in a complex with FGFBP1, FGF1 and FGF2. Interacts with FGFBP3. Interacts with integrin ITGAV:ITGB3; the interaction is required for FGF2 signaling. Interacts with SNORC (via the extracellular domain). Interacts with glypican GPC3. Phosphorylation at Tyr-215 regulates FGF2 unconventional secretion. In terms of processing, several N-termini starting at positions 94, 125, 126, 132, 143 and 162 have been identified by direct sequencing. Expressed in granulosa and cumulus cells. Expressed in hepatocellular carcinoma cells, but not in non-cancerous liver tissue.

It is found in the secreted. The protein localises to the nucleus. Functionally, acts as a ligand for FGFR1, FGFR2, FGFR3 and FGFR4. Also acts as an integrin ligand which is required for FGF2 signaling. Binds to integrin ITGAV:ITGB3. Plays an important role in the regulation of cell survival, cell division, cell differentiation and cell migration. Functions as a potent mitogen in vitro. Can induce angiogenesis. Mediates phosphorylation of ERK1/2 and thereby promotes retinal lens fiber differentiation. The protein is Fibroblast growth factor 2 (FGF2) of Homo sapiens (Human).